We begin with the raw amino-acid sequence, 342 residues long: D-erythrose-4-phosphate dehydrogenase (342 aa).

11–12 (RV) is a binding site for NAD(+). Substrate is bound by residues 153-155 (SCT), arginine 199, 212-213 (TK), and arginine 235. Cysteine 154 (nucleophile) is an active-site residue. An NAD(+)-binding site is contributed by asparagine 317.

It belongs to the glyceraldehyde-3-phosphate dehydrogenase family. Epd subfamily. In terms of assembly, homotetramer.

The protein resides in the cytoplasm. It carries out the reaction D-erythrose 4-phosphate + NAD(+) + H2O = 4-phospho-D-erythronate + NADH + 2 H(+). Its pathway is cofactor biosynthesis; pyridoxine 5'-phosphate biosynthesis; pyridoxine 5'-phosphate from D-erythrose 4-phosphate: step 1/5. Catalyzes the NAD-dependent conversion of D-erythrose 4-phosphate to 4-phosphoerythronate. The polypeptide is D-erythrose-4-phosphate dehydrogenase (Pseudoalteromonas atlantica (strain T6c / ATCC BAA-1087)).